We begin with the raw amino-acid sequence, 371 residues long: Alanine racemase (371 aa).

The active-site Proton acceptor; specific for D-alanine is the Lys40. Lys40 is modified (N6-(pyridoxal phosphate)lysine). Residue Arg138 participates in substrate binding. The active-site Proton acceptor; specific for L-alanine is the Tyr267. Met314 contributes to the substrate binding site.

This sequence belongs to the alanine racemase family. Requires pyridoxal 5'-phosphate as cofactor.

It carries out the reaction L-alanine = D-alanine. The protein operates within amino-acid biosynthesis; D-alanine biosynthesis; D-alanine from L-alanine: step 1/1. In terms of biological role, catalyzes the interconversion of L-alanine and D-alanine. May also act on other amino acids. This Ligilactobacillus salivarius (strain UCC118) (Lactobacillus salivarius) protein is Alanine racemase (alr).